Here is a 137-residue protein sequence, read N- to C-terminus: MKPGEIIVKRTEIEVNRGHNATILDVKNTGDRPIQVGSHYHFFEANPALQFEREKAYGKRLDIPAGAAVRFEPGDEKEVQLVEYSGKRRIFGFHGEVNGPIDEARVYKAEDDDSATEIIAEENKVSENANKESGYNR.

Residues 118-137 (IIAEENKVSENANKESGYNR) are disordered. The segment covering 126–137 (SENANKESGYNR) has biased composition (polar residues).

Belongs to the urease beta subunit family. Heterotrimer of UreA (gamma), UreB (beta) and UreC (alpha) subunits. Three heterotrimers associate to form the active enzyme.

Its subcellular location is the cytoplasm. It carries out the reaction urea + 2 H2O + H(+) = hydrogencarbonate + 2 NH4(+). The protein operates within nitrogen metabolism; urea degradation; CO(2) and NH(3) from urea (urease route): step 1/1. The sequence is that of Urease subunit beta from Staphylococcus xylosus.